A 969-amino-acid polypeptide reads, in one-letter code: Alpha-glucosidase (969 aa).

The signal sequence occupies residues 1–24 (MMISTAYQSLFLTALFSAISIAVG). N-linked (GlcNAc...) asparagine glycosylation is found at Asn37, Asn67, Asn99, Asn116, Asn139, Asn146, Asn209, Asn245, Asn249, Asn331, Asn406, Asn429, Asn462, and Asn470. The active-site Nucleophile is Asp481. Residue Glu484 is part of the active site. Asn520, Asn523, and Asn589 each carry an N-linked (GlcNAc...) asparagine glycan. The Proton donor role is filled by Asp647. 10 N-linked (GlcNAc...) asparagine glycosylation sites follow: Asn648, Asn801, Asn810, Asn821, Asn885, Asn915, Asn934, Asn942, Asn954, and Asn966.

It belongs to the glycosyl hydrolase 31 family.

The protein resides in the secreted. It carries out the reaction Hydrolysis of terminal, non-reducing (1-&gt;4)-linked alpha-D-glucose residues with release of alpha-D-glucose.. Functionally, hydrolyzes malto-oligosaccharides, but has a low activity toward soluble starch. This Schizosaccharomyces pombe (strain 972 / ATCC 24843) (Fission yeast) protein is Alpha-glucosidase (agl1).